We begin with the raw amino-acid sequence, 544 residues long: MNRCAEAAAVAATVPGSGVGDAGLRPPMVPRQASFFPPPVPNPFVQQTTISASRRLQMFLLGIILLPVRALLVGIILLLAWPFAVISTACCPEKLTHPISNWRRKITRPALTFLARAMFFSMGFTVTVKGKVASPLEAPIFVVAPHSTFFDGIACVVAGLPSLVSRNENAQTPLVGRLLRALQPVLVSRVDPDSRKNTINEIKKRATSGGEWPQILVFPEGTCTNRSCLITFKPGAFIPGVPVQPVLLRYPNKLDTVTWTWQGYTFLQLCVLTFCQLFTKVEIEFMPVQAPSEEEKNDPVLFASRIRNLMAEALEIPVTDHTYEDCRLMISAGQLTLPMEAGLVEFSKISRKLKLDWDGIRKHLDEYASIASSSKGGRIGIEEFAEYLKLPVSDVLRQLFALFDRNNDGSIDFREYVIGLAVLCNPANTEEIIQVAFKLFDVDEDGYITEEEFCTILQASLGVPDLNVSGLFREIAQRDSVSYEEFKSFALKHPEYAKIFTTYLDLQTCHVFSLPEEVQTAPSVASNKVSPESQEEGTSDKKVD.

Over 1 to 58 the chain is Cytoplasmic; it reads MNRCAEAAAVAATVPGSGVGDAGLRPPMVPRQASFFPPPVPNPFVQQTTISASRRLQM. Residues 59 to 79 traverse the membrane as a helical; Signal-anchor for type II membrane protein segment; that stretch reads FLLGIILLPVRALLVGIILLL. Residues 80 to 544 lie on the Lumenal side of the membrane; the sequence is AWPFAVISTA…EEGTSDKKVD (465 aa). Positions 146 to 151 match the HXXXXD motif motif; the sequence is HSTFFD. Residues 220–223 carry the EGTC motif motif; sequence EGTC. 2 consecutive EF-hand domains span residues 391–426 and 428–463; these read PVSD…LCNP and NTEE…SLGV. 10 residues coordinate Ca(2+): Asp404, Asn406, Asp408, Ser410, Glu415, Asp441, Asp443, Asp445, Tyr447, and Glu452. Residues 520–532 are compositionally biased toward polar residues; that stretch reads TAPSVASNKVSPE. Residues 520–544 form a disordered region; sequence TAPSVASNKVSPESQEEGTSDKKVD.

The protein belongs to the 1-acyl-sn-glycerol-3-phosphate acyltransferase family. As to expression, highest expression is found in resident macrophages and casein-induced neutrophils followed by skin, colon, spleen and thioglycollate-induced macrophages. Detected in erythroleukemic cells but not in reticulocytes.

The protein resides in the endoplasmic reticulum membrane. It localises to the golgi apparatus membrane. It is found in the cell membrane. Its subcellular location is the lipid droplet. The enzyme catalyses a 1-acyl-sn-glycero-3-phosphocholine + an acyl-CoA = a 1,2-diacyl-sn-glycero-3-phosphocholine + CoA. It carries out the reaction a 1-O-alkyl-sn-glycero-3-phosphocholine + acetyl-CoA = a 1-O-alkyl-2-acetyl-sn-glycero-3-phosphocholine + CoA. The catalysed reaction is a 1-acyl-sn-glycero-3-phosphate + an acyl-CoA = a 1,2-diacyl-sn-glycero-3-phosphate + CoA. It catalyses the reaction a 1-O-(1Z-alkenyl)-sn-glycero-3-phosphocholine + an acyl-CoA = a 1-O-(1Z-alkenyl)-2-acyl-sn-glycero-3-phosphocholine + CoA. The enzyme catalyses 1-O-octadecyl-sn-glycero-3-phosphocholine + acetyl-CoA = 1-O-octadecyl-2-acetyl-sn-glycero-3-phosphocholine + CoA. It carries out the reaction 1-hexadecanoyl-sn-glycero-3-phosphocholine + acetyl-CoA = 1-hexadecanoyl-2-acetyl-sn-glycero-3-phosphocholine + CoA. The catalysed reaction is 1-octadecanoyl-sn-glycero-3-phosphocholine + acetyl-CoA = 1-octadecanoyl-2-acetyl-sn-glycero-3-phosphocholine + CoA. It catalyses the reaction a 1-O-(1Z-alkenyl)-sn-glycero-3-phosphocholine + acetyl-CoA = 1-O-(1Z)-alkenyl-2-acetyl-sn-glycero-3-phosphocholine + CoA. The enzyme catalyses 1-O-hexadecyl-sn-glycero-3-phosphocholine + acetyl-CoA = 1-O-hexadecyl-2-acetyl-sn-glycero-3-phosphocholine + CoA. It carries out the reaction 1-O-octadecyl-sn-glycero-3-phosphocholine + (5Z,8Z,11Z,14Z)-eicosatetraenoyl-CoA = 1-O-octadecyl-2-(5Z,8Z,11Z,14Z)-eicosatetraenoyl-sn-glycero-3-phosphocholine + CoA. The catalysed reaction is 1-hexadecanoyl-sn-glycero-3-phosphate + (9Z)-octadecenoyl-CoA = 1-hexadecanoyl-2-(9Z-octadecenoyl)-sn-glycero-3-phosphate + CoA. It catalyses the reaction 1-(9Z-octadecenoyl)-sn-glycero-3-phosphate + (9Z)-octadecenoyl-CoA = 1,2-di-(9Z-octadecenoyl)-sn-glycero-3-phosphate + CoA. The enzyme catalyses 1-(9Z-octadecenoyl)-sn-glycero-3-phosphate + hexadecanoyl-CoA = 1-(9Z)-octadecenoyl-2-hexadecanoyl-sn-glycero-3-phosphate + CoA. It carries out the reaction 1-heptadecanoyl-sn-glycero-3-phosphate + (9Z)-octadecenoyl-CoA = 1-heptadecanoyl-2-(9Z)-octadecenoyl-sn-glycero-3-phosphate + CoA. The catalysed reaction is 1-octadecanoyl-sn-glycero-3-phosphate + (9Z)-octadecenoyl-CoA = 1-octadecanoyl-2-(9Z-octadecenoyl)-sn-glycero-3-phosphate + CoA. It catalyses the reaction heptadecanoyl-CoA + 1-(9Z-octadecenoyl)-sn-glycero-3-phosphate = 1-(9Z)-octadecenoyl-2-heptadecanoyl-sn-glycero-3-phosphate + CoA. The enzyme catalyses 1-(9Z-octadecenoyl)-sn-glycero-3-phosphate + (9Z,12Z)-octadecadienoyl-CoA = 1-(9Z)-octadecenoyl-2-(9Z,12Z)-octadecadienoyl-sn-glycero-3-phosphate + CoA. It carries out the reaction 1-(9Z-octadecenoyl)-sn-glycero-3-phosphate + tetradecanoyl-CoA = 1-(9Z)-octadecenoyl-2-tetradecanoyl-sn-glycero-3-phosphate + CoA. The catalysed reaction is pentadecanoyl-CoA + 1-(9Z-octadecenoyl)-sn-glycero-3-phosphate = 1-(9Z)-octadecenoyl-2-pentadecanoyl-sn-glycero-3-phosphate + CoA. It catalyses the reaction nonadecanoyl-CoA + 1-(9Z-octadecenoyl)-sn-glycero-3-phosphate = 1-(9Z)-octadecenoyl-2-nonadecanoyl-sn-glycero-3-phosphate + CoA. The enzyme catalyses 1-hexadecanoyl-sn-glycero-3-phosphocholine + (9Z)-octadecenoyl-CoA = 1-hexadecanoyl-2-(9Z-octadecenoyl)-sn-glycero-3-phosphocholine + CoA. The protein operates within lipid metabolism; phospholipid metabolism. Its activity is regulated as follows. Acetyltransferase activity is increased following acute inflammatory stimulation by lipopolysaccharide (LPS). Acyltransferase activity is unchanged. Its function is as follows. Exhibits both acyltransferase and acetyltransferase activities. Activity is calcium-dependent. Catalyzes the conversion of lysophosphatidylcholine (1-acyl-sn-glycero-3-phosphocholine or LPC) into phosphatidylcholine (1,2-diacyl-sn-glycero-3-phosphocholine or PC). Catalyzes the conversion 1-acyl-sn-glycerol-3-phosphate (lysophosphatidic acid or LPA) into 1,2-diacyl-sn-glycerol-3-phosphate (phosphatidic acid or PA) by incorporating an acyl moiety at the sn-2 position of the glycerol backbone. Involved in platelet-activating factor (PAF) biosynthesis by catalyzing the conversion of the PAF precursor, 1-O-alkyl-sn-glycero-3-phosphocholine (lyso-PAF) into 1-O-alkyl-2-acetyl-sn-glycero-3-phosphocholine (PAF). Also converts lyso-PAF to 1-O-alkyl-2-acyl-sn-glycero-3-phosphocholine (PC), a major component of cell membranes and a PAF precursor. Under resting conditions, acyltransferase activity is preferred. Upon acute inflammatory stimulus, acetyltransferase activity is enhanced and PAF synthesis increases. Involved in the regulation of lipid droplet number and size. In Mus musculus (Mouse), this protein is Lysophosphatidylcholine acyltransferase 2 (Lpcat2).